Reading from the N-terminus, the 285-residue chain is RING finger protein 223 (285 aa).

Residues Cys81–Arg132 form an RING-type zinc finger. A helical membrane pass occupies residues Val230–Cys250.

The protein localises to the membrane. The polypeptide is RING finger protein 223 (Rnf223) (Mus musculus (Mouse)).